The primary structure comprises 836 residues: MIRGRTAKVIPRNVIFTLSRSSISESPLISPSRINPKLAGSFSFNIRLLSYFTVRNGFCPDCSVPRDPNFVGLTTQCRSIVRRFCSEKIGSSESSGWTEEVEYLDESGSVLHSGKGIRSVEPGLDDHVMVGGLKKPYMNASSVAKIVEVVQRWKWGPELETQLDKLQFVPNMVHITQSLKIVKEVDAALSLFRWAKKQPWYLPSDECYVVLFDGLNQGRDFVGIQSLFEEMVQDSSSHGDLSFNAYNQVIQYLAKAEKLEVAFCCFKKAQESGCKIDTQTYNNLMMLFLNKGLPYKAFEIYESMEKTDSLLDGSTYELIIPSLAKSGRLDAAFKLFQQMKERKLRPSFSVFSSLVDSMGKAGRLDTSMKVYMEMQGFGHRPSATMFVSLIDSYAKAGKLDTALRLWDEMKKSGFRPNFGLYTMIIESHAKSGKLEVAMTVFKDMEKAGFLPTPSTYSCLLEMHAGSGQVDSAMKIYNSMTNAGLRPGLSSYISLLTLLANKRLVDVAGKILLEMKAMGYSVDVCASDVLMIYIKDASVDLALKWLRFMGSSGIKTNNFIIRQLFESCMKNGLYDSARPLLETLVHSAGKVDLVLYTSILAHLVRCQDEDKERQLMSILSATKHKAHAFMCGLFTGPEQRKQPVLTFVREFYQGIDYELEEGAARYFVNVLLNYLVLMGQINRARCVWKVAYENKLFPKAIVFDQHIAWSLDVRNLSVGAALIAVVHTLHRFRKRMLYYGVVPRRIKLVTGPTLKIVIAQMLSSVESPFEVSKVVLRAPGELVMEWFKKPIVQQFLLNEIPSRSDILMHKMNVMFPSSAPELRSMSPPKPLMSSKAF.

The transit peptide at 1–85 directs the protein to the mitochondrion; that stretch reads MIRGRTAKVI…QCRSIVRRFC (85 aa). 12 PPR repeats span residues 204-238, 242-276, 277-311, 312-346, 347-381, 382-416, 417-451, 452-486, 487-521, 528-555, 556-590, and 591-625; these read SDEC…SSSH, SFNA…GCKI, DTQT…DSLL, DGST…KLRP, SFSV…GHRP, SATM…GFRP, NFGL…GFLP, TPST…GLRP, GLSS…GYSV, VLMI…GIKT, NNFI…AGKV, and DLVL…KHKA. The 77-residue stretch at 710–786 folds into the Smr domain; it reads LDVRNLSVGA…APGELVMEWF (77 aa).

It belongs to the PPR family. P subfamily.

It localises to the mitochondrion. This is Pentatricopeptide repeat-containing protein At1g79490, mitochondrial (EMB2217) from Arabidopsis thaliana (Mouse-ear cress).